Consider the following 152-residue polypeptide: MDQTTRTVQAQKHIALVAHDHCKTSLMQWVAIHKEKLQHHILYATGTTGHLVQRATGLPVTAMMSGPMGGDQQVGALISEGRIDLLIFFWDPLNAVPHDPDVKALLRLATVWNIPVATNRTTADFIIHSPLFDRQVEIEIPDYQLYLQQRLK.

In terms of domain architecture, MGS-like spans 5–152 (TRTVQAQKHI…YQLYLQQRLK (148 aa)). Substrate is bound by residues H19, K23, 45-48 (TGTT), and 65-66 (SG). Catalysis depends on D71, which acts as the Proton donor/acceptor. Substrate is bound at residue H98.

Belongs to the methylglyoxal synthase family.

It carries out the reaction dihydroxyacetone phosphate = methylglyoxal + phosphate. Its function is as follows. Catalyzes the formation of methylglyoxal from dihydroxyacetone phosphate. This is Methylglyoxal synthase from Erwinia tasmaniensis (strain DSM 17950 / CFBP 7177 / CIP 109463 / NCPPB 4357 / Et1/99).